Consider the following 304-residue polypeptide: Protoheme IX farnesyltransferase 1 (304 aa).

The next 8 helical transmembrane spans lie at 24–44, 47–67, 99–119, 122–142, 150–170, 176–196, 228–248, and 280–300; these read VVVL…KAPL, FVPW…AGAA, MALG…LAFT, LTAW…TGFL, IVIG…AITG, PLLL…ALCI, LVLF…LVYL, and YSIV…YLPL.

Belongs to the UbiA prenyltransferase family. Protoheme IX farnesyltransferase subfamily.

The protein resides in the cell inner membrane. The enzyme catalyses heme b + (2E,6E)-farnesyl diphosphate + H2O = Fe(II)-heme o + diphosphate. The protein operates within porphyrin-containing compound metabolism; heme O biosynthesis; heme O from protoheme: step 1/1. In terms of biological role, converts heme B (protoheme IX) to heme O by substitution of the vinyl group on carbon 2 of heme B porphyrin ring with a hydroxyethyl farnesyl side group. The protein is Protoheme IX farnesyltransferase 1 of Pseudomonas aeruginosa (strain UCBPP-PA14).